The primary structure comprises 3038 residues: Lovastatin nonaketide synthase, polyketide synthase component (3038 aa).

The region spanning 8-447 is the Ketosynthase family 3 (KS3) domain; the sequence is NEPIVVVGSG…GTNAHAIIEE (440 aa). Residues cysteine 181, histidine 320, and histidine 367 each act as for beta-ketoacyl synthase activity in the active site. A malonyl-CoA:ACP transacylase (MAT) domain region spans residues 562-889; that stretch reads IFTGQGAQWP…GKNDLDTFSR (328 aa). Serine 656 acts as the For malonyltransferase activity in catalysis. A lovC-binding region spans residues 695–757; the sequence is AMLAAGMSFE…DESTFARLLR (63 aa). Positions 953-1089 are N-terminal hotdog fold; sequence HLLLGKLSEY…GQLALMIGDV (137 aa). A dehydratase (DH) domain region spans residues 953-1263; sequence HLLLGKLSEY…ENITFKPFSP (311 aa). The 315-residue stretch at 953–1267 folds into the PKS/mFAS DH domain; sequence HLLLGKLSEY…FKPFSPPDAS (315 aa). Histidine 985 serves as the catalytic Proton acceptor; for dehydratase activity. Residues 1107-1267 form a C-terminal hotdog fold region; sequence EEHPHMNRVN…FKPFSPPDAS (161 aa). Aspartate 1174 serves as the catalytic Proton donor; for dehydratase activity. The methyltransferase (CMet) domain stretch occupies residues 1443-1543; the sequence is LEIGAGTGGA…ARSLLKPGGQ (101 aa). Positions 2139-2437 are ketoreductase (KR) domain; that stretch reads TLPTRVRSID…KIPEYRGAKA (299 aa). The region spanning 2463–2538 is the Carrier domain; that stretch reads QIVIDGLSAK…DLADEAAARL (76 aa). An O-(pantetheine 4'-phosphoryl)serine modification is found at serine 2498. The interval 2546–2602 is disordered; sequence VAATDGGAESTDNTSENEVSGREDTDLSAAATITEPSSADEDDTEPGDEDVPRSHHP. Positions 2583 to 2594 are enriched in acidic residues; it reads SADEDDTEPGDE. Positions 2602–2952 are inactive Condensation domain; sequence PLSLGQEYSW…PTSNQPAPLL (351 aa).

Homodimer. Each MAT domain from the lovB homodimer binds one lovC molecule to form the final active lovB-lovC megasynthase complex. It depends on pantetheine 4'-phosphate as a cofactor.

The enzyme catalyses holo-[lovastatin nonaketide synthase] + 9 malonyl-CoA + S-adenosyl-L-methionine + 11 NADPH + 19 H(+) = dihydromonacolin L-[lovastatin nonaketide synthase] + S-adenosyl-L-homocysteine + 9 CO2 + 11 NADP(+) + 9 CoA + 6 H2O. Its pathway is polyketide biosynthesis; lovastatin biosynthesis. Its function is as follows. Lovastatin nonaketide synthase; part of the gene cluster that mediates the biosynthesis of lovastatin (also known as mevinolin, mevacor or monacolin K), a hypolipidemic inhibitor of (3S)-hydroxymethylglutaryl-coenzyme A (HMG-CoA) reductase (HMGR). The first step in the biosynthesis of lovastatin is the production of dihydromonacolin L acid by the lovastatin nonaketide synthase lovB and the trans-acting enoyl reductase lovC (called the lovB-lovC megasynthase complex) via condensation of one acetyl-CoA unit and 8 malonyl-CoA units. Dihydromonacolin L acid is released from lovB by the thioesterase lovG. Next, dihydromonacolin L acid is oxidized by the dihydromonacolin L monooxygenase lovA twice to form monacolin J acid. The 2-methylbutyrate moiety of lovastatin is synthesized by the lovastatin diketide synthase lovF via condensation of one acetyl-CoA unit and one malonyl-CoA unit. Finally, the covalent attachment of this moiety to monacolin J acid is catalyzed by the transesterase lovD to yield lovastatin. LovD has broad substrate specificity and can also convert monacolin J to simvastatin using alpha-dimethylbutanoyl-S-methyl-3-mercaptopropionate (DMB-S-MMP) as the thioester acyl donor, and can also catalyze the reverse reaction and function as hydrolase in vitro. LovD has much higher activity with LovF-bound 2-methylbutanoate than with free diketide substrates. This chain is Lovastatin nonaketide synthase, polyketide synthase component (lovB), found in Aspergillus terreus (strain NIH 2624 / FGSC A1156).